Reading from the N-terminus, the 272-residue chain is DNA repair protein RecO (272 aa).

Belongs to the RecO family.

Its function is as follows. Involved in DNA repair and RecF pathway recombination. The chain is DNA repair protein RecO from Limosilactobacillus fermentum (strain NBRC 3956 / LMG 18251) (Lactobacillus fermentum).